Here is a 432-residue protein sequence, read N- to C-terminus: Adenylosuccinate synthetase (432 aa).

GTP-binding positions include 13 to 19 (GDEGKGK) and 41 to 43 (GHT). The active-site Proton acceptor is the Asp14. Mg(2+) contacts are provided by Asp14 and Gly41. IMP-binding positions include 14-17 (DEGK), 39-42 (NAGH), Thr130, Arg144, Gln225, Thr240, and Arg304. His42 functions as the Proton donor in the catalytic mechanism. 300–306 (ATTGRKR) is a binding site for substrate. GTP contacts are provided by residues Arg306, 332–334 (KLD), and 415–417 (STG).

Belongs to the adenylosuccinate synthetase family. Homodimer. The cofactor is Mg(2+).

Its subcellular location is the cytoplasm. It carries out the reaction IMP + L-aspartate + GTP = N(6)-(1,2-dicarboxyethyl)-AMP + GDP + phosphate + 2 H(+). It participates in purine metabolism; AMP biosynthesis via de novo pathway; AMP from IMP: step 1/2. Plays an important role in the de novo pathway of purine nucleotide biosynthesis. Catalyzes the first committed step in the biosynthesis of AMP from IMP. In Vibrio cholerae serotype O1 (strain ATCC 39541 / Classical Ogawa 395 / O395), this protein is Adenylosuccinate synthetase.